The sequence spans 323 residues: Aspartate carbamoyltransferase catalytic subunit (323 aa).

The carbamoyl phosphate site is built by R61 and T62. Position 89 (K89) interacts with L-aspartate. R111, H144, and Q147 together coordinate carbamoyl phosphate. Positions 184 and 238 each coordinate L-aspartate. Carbamoyl phosphate contacts are provided by G279 and P280.

The protein belongs to the aspartate/ornithine carbamoyltransferase superfamily. ATCase family. In terms of assembly, heterododecamer (2C3:3R2) of six catalytic PyrB chains organized as two trimers (C3), and six regulatory PyrI chains organized as three dimers (R2).

The catalysed reaction is carbamoyl phosphate + L-aspartate = N-carbamoyl-L-aspartate + phosphate + H(+). Its pathway is pyrimidine metabolism; UMP biosynthesis via de novo pathway; (S)-dihydroorotate from bicarbonate: step 2/3. In terms of biological role, catalyzes the condensation of carbamoyl phosphate and aspartate to form carbamoyl aspartate and inorganic phosphate, the committed step in the de novo pyrimidine nucleotide biosynthesis pathway. The sequence is that of Aspartate carbamoyltransferase catalytic subunit from Acaryochloris marina (strain MBIC 11017).